Here is a 99-residue protein sequence, read N- to C-terminus: Transmembrane protein 14A (99 aa).

A run of 3 helical transmembrane segments spans residues 1-21, 24-44, and 79-99; these read MDLI…LGYK, GGVL…YGAY, and PAGL…LLLL.

This sequence belongs to the TMEM14 family.

The protein localises to the mitochondrion membrane. It is found in the endoplasmic reticulum membrane. Functionally, inhibits apoptosis via negative regulation of the mitochondrial outer membrane permeabilization involved in apoptotic signaling pathway. The sequence is that of Transmembrane protein 14A (TMEM14A) from Bos taurus (Bovine).